We begin with the raw amino-acid sequence, 462 residues long: Cysteine--tRNA ligase (462 aa).

Cys-30 contributes to the Zn(2+) binding site. The 'HIGH' region signature appears at 32-42 (MTVYDYCHVGH). Zn(2+)-binding residues include Cys-214, His-239, and Glu-243. The 'KMSKS' region signature appears at 271 to 275 (KMSKS). An ATP-binding site is contributed by Lys-274.

Belongs to the class-I aminoacyl-tRNA synthetase family. In terms of assembly, monomer. Zn(2+) serves as cofactor.

The protein resides in the cytoplasm. It catalyses the reaction tRNA(Cys) + L-cysteine + ATP = L-cysteinyl-tRNA(Cys) + AMP + diphosphate. This is Cysteine--tRNA ligase from Cupriavidus necator (strain ATCC 17699 / DSM 428 / KCTC 22496 / NCIMB 10442 / H16 / Stanier 337) (Ralstonia eutropha).